Here is a 279-residue protein sequence, read N- to C-terminus: MTLLRGDDFFTSRAVTVAVEPRTPQTAFPEHYHDFWEIVLVEQGAGVHVFNDQPYALCSGSVFFVRDNDRHLFEDVEGLCLTNMLYRSPRGFRFLSDIAAFLPYGPNGEWQGQWQVNAAGMQQLKQSLNSLAGLAQSDAPEAIAASESLFLQILVQLRQHCFQTEGNGSERQGVQALLGWLQNNYSEEVNWGGLADQFSLPLRTLHRQLKQHTGMTPQRYLNRLRLLEARRRLQQSDDSITTIAHACGFSDSNHFSTQFRKAFSQAPKSLRHQAFSREE.

One can recognise an HTH araC/xylS-type domain in the interval 175-273 (QALLGWLQNN…SQAPKSLRHQ (99 aa)). DNA-binding regions (H-T-H motif) lie at residues 192-213 (GGLADQFSLPLRTLHRQLKQHT) and 240-263 (ITTIAHACGFSDSNHFSTQFRKAF).

As to quaternary structure, binds DNA as a dimer.

The protein resides in the cytoplasm. Its function is as follows. Activates expression of the rhaBAD and rhaT operons. In Pectobacterium atrosepticum (strain SCRI 1043 / ATCC BAA-672) (Erwinia carotovora subsp. atroseptica), this protein is HTH-type transcriptional activator RhaS.